The sequence spans 425 residues: Serine--tRNA ligase (425 aa).

An L-serine-binding site is contributed by 233 to 235; sequence TAE. 264 to 266 provides a ligand contact to ATP; the sequence is RRE. Residue Glu287 coordinates L-serine. ATP is bound at residue 351 to 354; it reads EISS. L-serine is bound at residue Ser385.

This sequence belongs to the class-II aminoacyl-tRNA synthetase family. Type-1 seryl-tRNA synthetase subfamily. Homodimer. The tRNA molecule binds across the dimer.

The protein resides in the cytoplasm. The enzyme catalyses tRNA(Ser) + L-serine + ATP = L-seryl-tRNA(Ser) + AMP + diphosphate + H(+). The catalysed reaction is tRNA(Sec) + L-serine + ATP = L-seryl-tRNA(Sec) + AMP + diphosphate + H(+). Its pathway is aminoacyl-tRNA biosynthesis; selenocysteinyl-tRNA(Sec) biosynthesis; L-seryl-tRNA(Sec) from L-serine and tRNA(Sec): step 1/1. Its function is as follows. Catalyzes the attachment of serine to tRNA(Ser). Is also able to aminoacylate tRNA(Sec) with serine, to form the misacylated tRNA L-seryl-tRNA(Sec), which will be further converted into selenocysteinyl-tRNA(Sec). This is Serine--tRNA ligase from Prochlorococcus marinus (strain MIT 9215).